A 286-amino-acid polypeptide reads, in one-letter code: Nucleotide-binding protein HS_1178 (286 aa).

8-15 (GRSGAGKS) is a binding site for ATP. 56–59 (DIRN) contributes to the GTP binding site.

It belongs to the RapZ-like family.

Functionally, displays ATPase and GTPase activities. The polypeptide is Nucleotide-binding protein HS_1178 (Histophilus somni (strain 129Pt) (Haemophilus somnus)).